A 450-amino-acid chain; its full sequence is Probable glycylpeptide N-tetradecanoyltransferase (450 aa).

The segment at M1–V28 is disordered. The tetradecanoyl-CoA site is built by Q67, F68, W69, F200, L201, C202, V203, S209, R211, V212, and A213.

This sequence belongs to the NMT family.

Its subcellular location is the cytoplasm. It carries out the reaction N-terminal glycyl-[protein] + tetradecanoyl-CoA = N-tetradecanoylglycyl-[protein] + CoA + H(+). Functionally, adds a myristoyl group to the N-terminal glycine residue of certain cellular proteins. This chain is Probable glycylpeptide N-tetradecanoyltransferase (nmt-1), found in Caenorhabditis elegans.